The sequence spans 355 residues: MLASKLDPFLKRFEELNSLLSSSDILNDISKMTTLSKEQKNLEPIVLKTKEYLKTLDNIEENKALLNDPELGELAKEELKTLEELKPKLEEEIKILLLPKDLNDERNIFLEIRAGTGGDEASLFVGDLVKAYARYAENRGYKLEIVSSSEGSVGGFKEIIMLVKGTGAYSRLKYEGGTHRVQRVPQTESQGRVHTSAITVAVMPEVDDIEIEINPNDLKVDVMRSSGHGGQSVNTTDSAVRITHIPTGIVVVNQDGKSQHKNKESAMKVLKARLYEMQENERLAKESEARKSQVGSGDRSERIRTYNFPQNRISDHRINLTLYRLDAIMQDGLFDEIIEPLITHHQAQALQEQNL.

Q231 is subject to N5-methylglutamine. The segment covering 281 to 291 (ERLAKESEARK) has biased composition (basic and acidic residues). The interval 281–302 (ERLAKESEARKSQVGSGDRSER) is disordered.

It belongs to the prokaryotic/mitochondrial release factor family. Methylated by PrmC. Methylation increases the termination efficiency of RF1.

The protein localises to the cytoplasm. Functionally, peptide chain release factor 1 directs the termination of translation in response to the peptide chain termination codons UAG and UAA. The chain is Peptide chain release factor 1 from Campylobacter jejuni subsp. doylei (strain ATCC BAA-1458 / RM4099 / 269.97).